We begin with the raw amino-acid sequence, 273 residues long: Putative cysteine-rich repeat secretory protein 40 (273 aa).

Positions 1 to 32 (MYPSCSLLQRLVWFPFLALVATQLLFIRNVSS) are cleaved as a signal peptide. Gnk2-homologous domains follow at residues 39-141 (YLHH…SISV) and 151-264 (YENN…LYPF).

The protein belongs to the cysteine-rich repeat secretory protein family.

The protein resides in the secreted. The protein is Putative cysteine-rich repeat secretory protein 40 (CRRSP40) of Arabidopsis thaliana (Mouse-ear cress).